A 270-amino-acid polypeptide reads, in one-letter code: Elongation factor Ts (270 aa).

Residues 76 to 79 (TDFV) are involved in Mg(2+) ion dislocation from EF-Tu.

Belongs to the EF-Ts family.

It localises to the cytoplasm. Its function is as follows. Associates with the EF-Tu.GDP complex and induces the exchange of GDP to GTP. It remains bound to the aminoacyl-tRNA.EF-Tu.GTP complex up to the GTP hydrolysis stage on the ribosome. The chain is Elongation factor Ts from Corynebacterium aurimucosum (strain ATCC 700975 / DSM 44827 / CIP 107346 / CN-1) (Corynebacterium nigricans).